Here is a 385-residue protein sequence, read N- to C-terminus: MSQREWIEKDYYKELGVSSTASQDEIKKAYRKLARDLHPDANPGDSKAEERFKAVSEAHAVLSDPAKRKEYDETRRLFAGGGYPRGGFGPGGAGGFSQGFDIGDIFGGTAAGDGGLGDILGGLFNRGGTRTTSRPRRGADVETETTLGFREAAQGVTVPLRMTSPSPCTTCHGSGAKPGTSPRVCPICNGTGVVSRNQGAFGFSEPCDGCRGTGSIIDDPCVDCHGSGIQNRTRTITVRIPPGVSDGQRIRLAGQGEAGLRGAPSGDLYVTVHVSQDKVFGRNGDDLTLVLPVSYAELVLGTTVSVPTLDGRVGVKVPPGTADGRTLRVRGRGVPKRGGGAGDLLVTVKVAVPQKLDDDALEALERYREAEKASGFDPRAGWAGA.

The J domain occupies 10–75 (DYYKELGVSS…AKRKEYDETR (66 aa)). The segment at 155-233 (GVTVPLRMTS…CHGSGIQNRT (79 aa)) adopts a CR-type zinc-finger fold. Cys168, Cys171, Cys185, Cys188, Cys207, Cys210, Cys221, and Cys224 together coordinate Zn(2+). CXXCXGXG motif repeat units lie at residues 168 to 175 (CTTCHGSG), 185 to 192 (CPICNGTG), 207 to 214 (CDGCRGTG), and 221 to 228 (CVDCHGSG).

Belongs to the DnaJ family. Homodimer. Requires Zn(2+) as cofactor.

It localises to the cytoplasm. Its function is as follows. Participates actively in the response to hyperosmotic and heat shock by preventing the aggregation of stress-denatured proteins and by disaggregating proteins, also in an autonomous, DnaK-independent fashion. Unfolded proteins bind initially to DnaJ; upon interaction with the DnaJ-bound protein, DnaK hydrolyzes its bound ATP, resulting in the formation of a stable complex. GrpE releases ADP from DnaK; ATP binding to DnaK triggers the release of the substrate protein, thus completing the reaction cycle. Several rounds of ATP-dependent interactions between DnaJ, DnaK and GrpE are required for fully efficient folding. Also involved, together with DnaK and GrpE, in the DNA replication of plasmids through activation of initiation proteins. This is Chaperone protein DnaJ 2 from Nocardia farcinica (strain IFM 10152).